A 1062-amino-acid polypeptide reads, in one-letter code: Probable sucrose-phosphate synthase 3 (1062 aa).

The segment covering 113-122 (EREQGRRDAT) has biased composition (basic and acidic residues). The segment at 113–141 (EREQGRRDATEDLSEDLSEGEKGDGLGEI) is disordered. A phosphoserine mark is found at Ser126, Ser130, and Ser156. The disordered stretch occupies residues 715 to 735 (MDGDKPSLNGSLEPNSADPVK).

The protein belongs to the glycosyltransferase 1 family. In terms of assembly, homodimer or homotetramer.

The catalysed reaction is beta-D-fructose 6-phosphate + UDP-alpha-D-glucose = sucrose 6(F)-phosphate + UDP + H(+). It participates in glycan biosynthesis; sucrose biosynthesis; sucrose from D-fructose 6-phosphate and UDP-alpha-D-glucose: step 1/2. Activity is regulated by phosphorylation and moderated by concentration of metabolites and light. Plays a role in photosynthetic sucrose synthesis by catalyzing the rate-limiting step of sucrose biosynthesis from UDP-glucose and fructose- 6-phosphate. Involved in the regulation of carbon partitioning in the leaves of plants. May regulate the synthesis of sucrose and therefore play a major role as a limiting factor in the export of photoassimilates out of the leaf. Plays a role for sucrose availability that is essential for plant growth and fiber elongation. The sequence is that of Probable sucrose-phosphate synthase 3 (SPS3) from Arabidopsis thaliana (Mouse-ear cress).